A 114-amino-acid chain; its full sequence is Ghrelin (114 aa).

A signal peptide spans 1-24 (MNFGKAAIFGVVLFCLLWTEGAQA). Threonine 27 carries the O-decanoyl threonine; alternate lipid modification. Threonine 27 carries the O-octanoyl threonine; alternate lipid modification. A propeptide spans 55 to 114 (GVEDDLAGEEIGVTFPLDMKMTQEQFQKQRAAVQDFLYSSLLSLGSVQDTEDKNENPQSQ) (removed in mature form).

It belongs to the motilin family. Post-translationally, O-octanoylated by GOAT/MBOAT4. O-octanoylation or O-decanoylation is essential for activity. The O-decanoylated form ghrelin-27-C10 differs in the length of the carbon backbone of the carboxylic acid bound to Thr-27. 33% of frog ghrelin is O-decanoylated. In terms of processing, 80% of frog ghrelin has Asn-52 cleaved from its C-terminus giving rise to ghrelin-27. In terms of tissue distribution, high levels in stomach. Moderate levels in small intestine, pancreas and testis. Low levels in heart, lung and gall bladder.

The protein localises to the secreted. Its function is as follows. Ligand for growth hormone secretagogue receptor type 1 (GHSR). Induces the release of growth hormone from the pituitary. Has an appetite-stimulating effect, induces adiposity and stimulates gastric acid secretion. Involved in growth regulation. This Aquarana catesbeiana (American bullfrog) protein is Ghrelin (GHRL).